The sequence spans 312 residues: DNA-directed RNA polymerase subunit alpha (312 aa).

The segment at methionine 1–threonine 229 is alpha N-terminal domain (alpha-NTD). The alpha C-terminal domain (alpha-CTD) stretch occupies residues glutamine 245–alanine 312.

The protein belongs to the RNA polymerase alpha chain family. In terms of assembly, in cyanobacteria the RNAP catalytic core is composed of 2 alpha, 1 beta, 1 beta', 1 gamma and 1 omega subunit. When a sigma factor is associated with the core the holoenzyme is formed, which can initiate transcription.

It carries out the reaction RNA(n) + a ribonucleoside 5'-triphosphate = RNA(n+1) + diphosphate. Functionally, DNA-dependent RNA polymerase catalyzes the transcription of DNA into RNA using the four ribonucleoside triphosphates as substrates. In Prochlorococcus marinus (strain MIT 9313), this protein is DNA-directed RNA polymerase subunit alpha.